A 360-amino-acid polypeptide reads, in one-letter code: MRLLEKLWGQKPSRKSDKKKNGTSNYPYAVTRVRAMKSKLLPKESYPRLLNMGIDGITRFIQESEYKNDVNELAMKYSGGDLAEHALNRNLALTYDKLVRITGGELNYLVVAYLKRYDIWNIKTLLRGKIYNASAEDIMESLIAAGEFTYTSMSELAAKATYKEIIEALKYSEYYPLLQKFDGTNLAYIENELDKMYYTGLFGAIGKPRSKDRKLFLKVVRLEVDVKNLINLFRLKKAGVMQLDEIMPLMIEGGLELKPEKLATLPYDEFVNELQRTQYWDVISGVTSSDMTSLTTLESRLTRYYLESSTVLSHVSPISVAPILDYIIHKHNEATNLRIIFRGKETGLSDELIKDQLVVI.

The interval 1-25 (MRLLEKLWGQKPSRKSDKKKNGTSN) is disordered.

Belongs to the V-ATPase V0D/AC39 subunit family. In terms of assembly, has multiple subunits with at least A(3), B(3), C, D, E, F, H, I and proteolipid K(x).

The protein localises to the cell membrane. Functionally, component of the A-type ATP synthase that produces ATP from ADP in the presence of a proton gradient across the membrane. This Methanosarcina barkeri (strain Fusaro / DSM 804) protein is A-type ATP synthase subunit C.